The sequence spans 202 residues: Dephospho-CoA kinase (202 aa).

The DPCK domain maps to Lys6 to Leu202. Residue Ser14 to Glu19 participates in ATP binding.

Belongs to the CoaE family.

It is found in the cytoplasm. The catalysed reaction is 3'-dephospho-CoA + ATP = ADP + CoA + H(+). It participates in cofactor biosynthesis; coenzyme A biosynthesis; CoA from (R)-pantothenate: step 5/5. Catalyzes the phosphorylation of the 3'-hydroxyl group of dephosphocoenzyme A to form coenzyme A. The sequence is that of Dephospho-CoA kinase from Chlamydia caviae (strain ATCC VR-813 / DSM 19441 / 03DC25 / GPIC) (Chlamydophila caviae).